The sequence spans 357 residues: Transcription factor unc-86 (357 aa).

The short motif at 35–44 (RAAQVALADI) is the POU-IV box element. Positions 155–232 (DMDTDPRQLE…ILHSWLEKAE (78 aa)) constitute a POU-specific domain. The segment at residues 253 to 312 (KKRKRTSIAAPEKRELEQFFKQQPRPSGERIASIADRLDLKKNVVRVWFCNQRQKQKRDF) is a DNA-binding region (homeobox).

It belongs to the POU transcription factor family. Class-4 subfamily. In terms of assembly, interacts with mec-3; the heterooligomer binds to the promoters of mec-3, mec-4 and mec-7. In terms of tissue distribution, specific to neurons and neuroblasts. Expressed in CEM head neurons and in IL2, URA, URB, URX and URY neurons. Not expressed in olfactory sensory neurons but expressed in AIZ interneurons.

It is found in the nucleus. In terms of biological role, transcription factor required for correct cell fate determination and differentiation in diverse neuronal cell lineages where it plays a role in specifying the fate of daughter cells during cell divisions. Involved in sensory neuron production and function. Binds both alone and with mec-3 to the mec-3 promoter to initiate and maintain mec-3 expression which is required for sensory neuron differentiation. In addition, binds both alone and with mec-3 to the promoters of mec-4 and mec-7 which act to regulate sensory neuron function. Involved in determining the identity of the serotonergic NSM neurons and the cholinergic IL2 sensory and URA motor neurons. Promotes expression of the cfi-1 transcription factor in the URA and IL2 neurons which in turn activates normal URA and IL2 gene expression. Required to determine the identity of BDU sensory neurons in concert with transcription factor unc-86, regulating expression of a number of genes, including transcription factors ceh-14 and ahr-1, neuropeptides flp-10, nlp-1 and nlp-15, and tyramine receptor-encoding ser-2. Regulates expression of a number of genes in NSM neurons including bas-1, cat-1, dop-3, mgl-3, nlp-13, scd-2 and ptps-1. In the IL2 neurons, required for expression of cho-1, gcy-19, klp-6, lag-2, unc-5 and unc-17. Promotes expression of pkd-2 in the male-specific CEM head neurons. Required for dauer-specific branching of IL2Q neurons and nictation behavior. Controls both the timing and direction of axon outgrowth in HSN neurons. Plays a role in serotonin production by regulating expression of the tryptophan hydrolase tph-1 which catalyzes serotonin synthesis, in the AIM, NSM, HSN and RIH neurons. Involved in regulation of lin-11 expression in the AIZ interneurons, the major interneurons of the olfactory pathway, and is required for odortaxis behavior. Involved in neurite pruning between AIM neurons during larval development by regulating the expression of transcription factor mbr-1. Required for correct localization of unc-40. This chain is Transcription factor unc-86 (unc-86), found in Caenorhabditis elegans.